The chain runs to 206 residues: Small ribosomal subunit protein uS4 (206 aa).

One can recognise an S4 RNA-binding domain in the interval 96-156; that stretch reads GRLDNVVYRM…EKAKKQSRVK (61 aa).

It belongs to the universal ribosomal protein uS4 family. In terms of assembly, part of the 30S ribosomal subunit. Contacts protein S5. The interaction surface between S4 and S5 is involved in control of translational fidelity.

Functionally, one of the primary rRNA binding proteins, it binds directly to 16S rRNA where it nucleates assembly of the body of the 30S subunit. Its function is as follows. With S5 and S12 plays an important role in translational accuracy. The chain is Small ribosomal subunit protein uS4 from Salmonella agona (strain SL483).